The following is a 406-amino-acid chain: Tryptophan 2,3-dioxygenase (406 aa).

At S19 the chain carries Phosphoserine. Substrate-binding positions include 72-76 (FIITH) and R144. H328 provides a ligand contact to heme. T342 contributes to the substrate binding site.

This sequence belongs to the tryptophan 2,3-dioxygenase family. In terms of assembly, homotetramer. Dimer of dimers. The cofactor is heme.

The catalysed reaction is L-tryptophan + O2 = N-formyl-L-kynurenine. It participates in amino-acid degradation; L-tryptophan degradation via kynurenine pathway; L-kynurenine from L-tryptophan: step 1/2. Heme-dependent dioxygenase that catalyzes the oxidative cleavage of the L-tryptophan (L-Trp) pyrrole ring and converts L-tryptophan to N-formyl-L-kynurenine. Catalyzes the oxidative cleavage of the indole moiety. In Mus musculus (Mouse), this protein is Tryptophan 2,3-dioxygenase.